Here is a 444-residue protein sequence, read N- to C-terminus: Phosphoglucosamine mutase (444 aa).

Serine 101 (phosphoserine intermediate) is an active-site residue. Mg(2+) contacts are provided by serine 101, aspartate 240, aspartate 242, and aspartate 244. The residue at position 101 (serine 101) is a Phosphoserine.

Belongs to the phosphohexose mutase family. Mg(2+) is required as a cofactor. Post-translationally, activated by phosphorylation.

It carries out the reaction alpha-D-glucosamine 1-phosphate = D-glucosamine 6-phosphate. Functionally, catalyzes the conversion of glucosamine-6-phosphate to glucosamine-1-phosphate. The sequence is that of Phosphoglucosamine mutase from Aeromonas hydrophila subsp. hydrophila (strain ATCC 7966 / DSM 30187 / BCRC 13018 / CCUG 14551 / JCM 1027 / KCTC 2358 / NCIMB 9240 / NCTC 8049).